Consider the following 163-residue polypeptide: NADH-quinone oxidoreductase subunit I (163 aa).

2 4Fe-4S ferredoxin-type domains span residues 53–83 (LRRYPNGEERCIACKLCEAICPAQAITIEAG) and 94–123 (VRYDIDMVKCIYCGFCQEACPVDAIVEGPN). 8 residues coordinate [4Fe-4S] cluster: C63, C66, C69, C73, C103, C106, C109, and C113.

It belongs to the complex I 23 kDa subunit family. As to quaternary structure, NDH-1 is composed of 14 different subunits. Subunits NuoA, H, J, K, L, M, N constitute the membrane sector of the complex. [4Fe-4S] cluster is required as a cofactor.

Its subcellular location is the cell inner membrane. It catalyses the reaction a quinone + NADH + 5 H(+)(in) = a quinol + NAD(+) + 4 H(+)(out). NDH-1 shuttles electrons from NADH, via FMN and iron-sulfur (Fe-S) centers, to quinones in the respiratory chain. The immediate electron acceptor for the enzyme in this species is believed to be ubiquinone. Couples the redox reaction to proton translocation (for every two electrons transferred, four hydrogen ions are translocated across the cytoplasmic membrane), and thus conserves the redox energy in a proton gradient. In Agrobacterium fabrum (strain C58 / ATCC 33970) (Agrobacterium tumefaciens (strain C58)), this protein is NADH-quinone oxidoreductase subunit I.